Consider the following 134-residue polypeptide: Fluoride-specific ion channel FluC 2 (134 aa).

Transmembrane regions (helical) follow at residues 1–21 (MNYF…EITG), 28–48 (IFPV…LFFM), 68–88 (GFLG…LLLF), and 92–112 (LLIG…SGIL). 2 residues coordinate Na(+): G71 and T74.

This sequence belongs to the fluoride channel Fluc/FEX (TC 1.A.43) family.

Its subcellular location is the cell membrane. It catalyses the reaction fluoride(in) = fluoride(out). Its activity is regulated as follows. Na(+) is not transported, but it plays an essential structural role and its presence is essential for fluoride channel function. Functionally, fluoride-specific ion channel. Important for reducing fluoride concentration in the cell, thus reducing its toxicity. The polypeptide is Fluoride-specific ion channel FluC 2 (Carboxydothermus hydrogenoformans (strain ATCC BAA-161 / DSM 6008 / Z-2901)).